A 209-amino-acid chain; its full sequence is Thiamine-phosphate synthase (209 aa).

Residues 32 to 36 (QLRMK) and Asp-64 contribute to the 4-amino-2-methyl-5-(diphosphooxymethyl)pyrimidine site. Asp-65 and Asp-84 together coordinate Mg(2+). Residue Thr-103 coordinates 4-amino-2-methyl-5-(diphosphooxymethyl)pyrimidine. Residue 129–131 (TTT) coordinates 2-[(2R,5Z)-2-carboxy-4-methylthiazol-5(2H)-ylidene]ethyl phosphate. A 4-amino-2-methyl-5-(diphosphooxymethyl)pyrimidine-binding site is contributed by Lys-132. Gly-165 contributes to the 2-[(2R,5Z)-2-carboxy-4-methylthiazol-5(2H)-ylidene]ethyl phosphate binding site.

This sequence belongs to the thiamine-phosphate synthase family. Requires Mg(2+) as cofactor.

It carries out the reaction 2-[(2R,5Z)-2-carboxy-4-methylthiazol-5(2H)-ylidene]ethyl phosphate + 4-amino-2-methyl-5-(diphosphooxymethyl)pyrimidine + 2 H(+) = thiamine phosphate + CO2 + diphosphate. It catalyses the reaction 2-(2-carboxy-4-methylthiazol-5-yl)ethyl phosphate + 4-amino-2-methyl-5-(diphosphooxymethyl)pyrimidine + 2 H(+) = thiamine phosphate + CO2 + diphosphate. The catalysed reaction is 4-methyl-5-(2-phosphooxyethyl)-thiazole + 4-amino-2-methyl-5-(diphosphooxymethyl)pyrimidine + H(+) = thiamine phosphate + diphosphate. It functions in the pathway cofactor biosynthesis; thiamine diphosphate biosynthesis; thiamine phosphate from 4-amino-2-methyl-5-diphosphomethylpyrimidine and 4-methyl-5-(2-phosphoethyl)-thiazole: step 1/1. In terms of biological role, condenses 4-methyl-5-(beta-hydroxyethyl)thiazole monophosphate (THZ-P) and 2-methyl-4-amino-5-hydroxymethyl pyrimidine pyrophosphate (HMP-PP) to form thiamine monophosphate (TMP). This Bacteroides thetaiotaomicron (strain ATCC 29148 / DSM 2079 / JCM 5827 / CCUG 10774 / NCTC 10582 / VPI-5482 / E50) protein is Thiamine-phosphate synthase.